Reading from the N-terminus, the 532-residue chain is Exodeoxyribonuclease 7 large subunit (532 aa).

The tract at residues 497-532 (AITTGEGTPAPETAAAPKKKPAKPASSDPGNQGNLF) is disordered. The span at 499–512 (TTGEGTPAPETAAA) shows a compositional bias: low complexity.

Belongs to the XseA family. In terms of assembly, heterooligomer composed of large and small subunits.

It is found in the cytoplasm. It carries out the reaction Exonucleolytic cleavage in either 5'- to 3'- or 3'- to 5'-direction to yield nucleoside 5'-phosphates.. Bidirectionally degrades single-stranded DNA into large acid-insoluble oligonucleotides, which are then degraded further into small acid-soluble oligonucleotides. The protein is Exodeoxyribonuclease 7 large subunit of Agrobacterium fabrum (strain C58 / ATCC 33970) (Agrobacterium tumefaciens (strain C58)).